The sequence spans 1010 residues: Eukaryotic translation initiation factor 4E transporter (1010 aa).

The YXXXXLphi motif signature appears at 10–16 (YSKVDLL). 5 disordered regions span residues 154–182 (GSNS…RKGS), 196–277 (PDHD…RLVE), 289–320 (YDSK…SKRG), 354–391 (NEER…SNDS), and 921–960 (QSNP…ERIS). The segment covering 201–211 (CMSSSPTFSTS) has biased composition (polar residues). The segment covering 227-247 (DNWDYKNEKTVEASIENEKET) has biased composition (basic and acidic residues). Residues 248 to 263 (SPNGSGSTSSLNQHNQ) show a composition bias toward polar residues. Composition is skewed to basic and acidic residues over residues 354-364 (NEERSVTEDKN) and 372-384 (KNLD…DEAS). Polar residues predominate over residues 934-953 (SDSSDSGNVIKANSLTSPSY).

Belongs to the 4E-T/EIF4E-T family. In terms of assembly, interacts (via YXXXXLphi motif) with eIF4E1. Interacts with DDX6/me31B. As to expression, expressed in all larval and adult organs and tissues, with highest levels in the ovary.

The protein localises to the cytoplasm. It is found in the P-body. It localises to the nucleus. EIF4E1-binding protein that regulates translation and stability of mRNAs in processing bodies (P-bodies). Probably plays a role in P-bodies to coordinate the storage of translationally inactive mRNAs in the cytoplasm and prevent their degradation. Acts as a binding platform for multiple RNA-binding proteins. Required for the formation of P-bodies. The polypeptide is Eukaryotic translation initiation factor 4E transporter (Drosophila melanogaster (Fruit fly)).